Consider the following 339-residue polypeptide: Methionyl-tRNA formyltransferase (339 aa).

110–113 is a (6S)-5,6,7,8-tetrahydrofolate binding site; the sequence is SLLP.

The protein belongs to the Fmt family.

The enzyme catalyses L-methionyl-tRNA(fMet) + (6R)-10-formyltetrahydrofolate = N-formyl-L-methionyl-tRNA(fMet) + (6S)-5,6,7,8-tetrahydrofolate + H(+). Its function is as follows. Attaches a formyl group to the free amino group of methionyl-tRNA(fMet). The formyl group appears to play a dual role in the initiator identity of N-formylmethionyl-tRNA by promoting its recognition by IF2 and preventing the misappropriation of this tRNA by the elongation apparatus. In Prochlorococcus marinus (strain SARG / CCMP1375 / SS120), this protein is Methionyl-tRNA formyltransferase.